Reading from the N-terminus, the 141-residue chain is D-aminoacyl-tRNA deacylase (141 aa).

A Gly-cisPro motif, important for rejection of L-amino acids motif is present at residues 133 to 134; it reads GP.

The protein belongs to the DTD family. As to quaternary structure, homodimer.

The protein localises to the cytoplasm. The enzyme catalyses glycyl-tRNA(Ala) + H2O = tRNA(Ala) + glycine + H(+). It catalyses the reaction a D-aminoacyl-tRNA + H2O = a tRNA + a D-alpha-amino acid + H(+). Its function is as follows. An aminoacyl-tRNA editing enzyme that deacylates mischarged D-aminoacyl-tRNAs. Also deacylates mischarged glycyl-tRNA(Ala), protecting cells against glycine mischarging by AlaRS. Acts via tRNA-based rather than protein-based catalysis; rejects L-amino acids rather than detecting D-amino acids in the active site. By recycling D-aminoacyl-tRNA to D-amino acids and free tRNA molecules, this enzyme counteracts the toxicity associated with the formation of D-aminoacyl-tRNA entities in vivo and helps enforce protein L-homochirality. The chain is D-aminoacyl-tRNA deacylase from Beutenbergia cavernae (strain ATCC BAA-8 / DSM 12333 / CCUG 43141 / JCM 11478 / NBRC 16432 / NCIMB 13614 / HKI 0122).